Here is a 96-residue protein sequence, read N- to C-terminus: Small ribosomal subunit protein bS6 (96 aa).

The protein belongs to the bacterial ribosomal protein bS6 family.

Its function is as follows. Binds together with bS18 to 16S ribosomal RNA. The polypeptide is Small ribosomal subunit protein bS6 (Bacillus cereus (strain G9842)).